Reading from the N-terminus, the 421-residue chain is Cyclin-A2 (421 aa).

N-acetylmethionine is present on Met1. The interval 1–60 (MPGSSRQSGREAGSALLSLQQEDQENVNPEKAAPDQRARAALKTGNARGNAPQQRLKARR) is disordered. Ser5 carries the phosphoserine modification.

It belongs to the cyclin family. Cyclin AB subfamily. As to quaternary structure, interacts with the CDK1 and CDK2 protein kinases to form serine/threonine kinase holoenzyme complexes. Interacts with CDK1 (hyperphosphorylated form in G1 and underphosphorylated forms in S and G2). Interacts with CDK2; the interaction increases from G1 to G2. Interacts (associated with CDK2 but not with CDK1) with SCAPER; regulates the activity of CCNA2/CDK2 by transiently maintaining CCNA2 in the cytoplasm. Forms a ternary complex with CDK2 and CDKN1B; CDKN1B inhibits the kinase activity of CDK2 through conformational rearrangements. Interacts with INCA1. Post-translationally, polyubiquitinated via 'Lys-11'-linked ubiquitin by the anaphase-promoting complex (APC/C), leading to its degradation by the proteasome. Deubiquitinated and stabilized by USP37 enables entry into S phase. Ubiquitinated during the G1 phase by the SCF(FBXO31) complex, leading to its proteasomal degradation.

The protein localises to the nucleus. It localises to the cytoplasm. Its function is as follows. Cyclin which controls both the G1/S and the G2/M transition phases of the cell cycle. Functions through the formation of specific serine/threonine kinase holoenzyme complexes with the cyclin-dependent protein kinases CDK1 and CDK2. The cyclin subunit confers the substrate specificity of these complexes and differentially interacts with and activates CDK1 and CDK2 throughout the cell cycle. The sequence is that of Cyclin-A2 from Mesocricetus auratus (Golden hamster).